The following is a 116-amino-acid chain: Transcription elongation factor SPT4 homolog 2 (116 aa).

A C4-type zinc finger spans residues 19-39; the sequence is CLRCRLVKTYDQFRDAGCENC.

This sequence belongs to the SPT4 family.

Its subcellular location is the nucleus. May regulate transcription elongation by RNA polymerase II. May enhance transcriptional pausing at sites proximal to the promoter, which may in turn facilitate the assembly of an elongation competent RNA polymerase II complex. In Arabidopsis thaliana (Mouse-ear cress), this protein is Transcription elongation factor SPT4 homolog 2.